The primary structure comprises 523 residues: Mitochondrial distribution and morphology protein 34 (523 aa).

An SMP-LTD domain is found at 1-200 (MSFKVNWKSL…LPTLIHQFSL (200 aa)). Residues 489-523 (ELSMDRSGKRKQRNYGSATYESENPIVAPPPPYSH) are disordered.

The protein belongs to the MDM34 family. As to quaternary structure, component of the ER-mitochondria encounter structure (ERMES) or MDM complex, composed of MMM1, MDM10, MDM12 and MDM34.

It is found in the mitochondrion outer membrane. Functionally, component of the ERMES/MDM complex, which serves as a molecular tether to connect the endoplasmic reticulum (ER) and mitochondria. Components of this complex are involved in the control of mitochondrial shape and protein biogenesis, and function in nonvesicular lipid trafficking between the ER and mitochondria. MDM34 is required for the interaction of the ER-resident membrane protein MMM1 and the outer mitochondrial membrane-resident beta-barrel protein MDM10. The sequence is that of Mitochondrial distribution and morphology protein 34 from Scheffersomyces stipitis (strain ATCC 58785 / CBS 6054 / NBRC 10063 / NRRL Y-11545) (Yeast).